Consider the following 983-residue polypeptide: Glycine dehydrogenase (decarboxylating) (983 aa).

Position 731 is an N6-(pyridoxal phosphate)lysine (Lys-731).

This sequence belongs to the GcvP family. As to quaternary structure, the glycine cleavage system is composed of four proteins: P, T, L and H. The cofactor is pyridoxal 5'-phosphate.

The catalysed reaction is N(6)-[(R)-lipoyl]-L-lysyl-[glycine-cleavage complex H protein] + glycine + H(+) = N(6)-[(R)-S(8)-aminomethyldihydrolipoyl]-L-lysyl-[glycine-cleavage complex H protein] + CO2. Its function is as follows. The glycine cleavage system catalyzes the degradation of glycine. The P protein binds the alpha-amino group of glycine through its pyridoxal phosphate cofactor; CO(2) is released and the remaining methylamine moiety is then transferred to the lipoamide cofactor of the H protein. This chain is Glycine dehydrogenase (decarboxylating), found in Nostoc sp. (strain PCC 7120 / SAG 25.82 / UTEX 2576).